A 617-amino-acid chain; its full sequence is Actin-binding protein (617 aa).

Residues 7–136 form the ADF-H domain; it reads DATTHSRDIE…DEEELLTKIS (130 aa). 2 disordered regions span residues 169–223 and 325–574; these read PSLA…LSDN and AEKK…GEDN. The 1-1 repeat unit spans residues 202–211; the sequence is ADDWDEPEIK. Residues 202–600 are 3 X 10 AA approximate repeats; it reads ADDWDEPEIK…DDDWWLGELE (399 aa). Basic and acidic residues-rich tracts occupy residues 340–351 and 359–375; these read EEQKPVETKTEI and DEMKIGDLKSRFEKLGA. Over residues 400–411 the composition is skewed to polar residues; the sequence is TFGQPAANSKPA. Acidic residues-rich tracts occupy residues 437-453, 483-502, and 516-530; these read EHEEEDNDDDWGEDEDE, EPVEEGEEEEEEEEEEEEEA, and PEPEQPQEEEEEEEA. 4 repeat units span residues 444-453, 495-510, 523-538, and 591-600. The segment at 495 to 538 is 2 X 16 AA repeats of E(7)-A-P-A-P-S-L-P-S-R; the sequence is EEEEEEEAPAPSLPSRNAAPEPEPEQPQEEEEEEEAPAPSLPSR. In terms of domain architecture, SH3 spans 557 to 617; it reads AEAPWATAEY…FPSNYVVLGN (61 aa).

Its subcellular location is the cytoplasm. The protein resides in the cytoskeleton. May be involved in the spatial organization of cell surface growth. An overproduction of ABP1 causes the assembly of the cortical actin skeleton at inappropriate sites on the cell surface, resulting in delocalized surface growth. This chain is Actin-binding protein (ABP1), found in Maudiozyma exigua (Yeast).